Here is a 264-residue protein sequence, read N- to C-terminus: Endochitinase At2g43590 (264 aa).

An N-terminal signal peptide occupies residues 1 to 24; that stretch reads MAFTKISLVLLLCLLGFFSETVKS. Residues 25–59 form the Chitin-binding type-1 domain; that stretch reads QNCGCAPNLCCSQFGYCGTDDAYCGVGCRSGPCRG. 4 disulfide bridges follow: cysteine 27-cysteine 35, cysteine 29-cysteine 41, cysteine 34-cysteine 48, and cysteine 52-cysteine 57. The tract at residues 66–264 is catalytic; the sequence is GSVGSIVTQG…GVDPGPNLSC (199 aa). Glutamate 128 (proton donor) is an active-site residue. N-linked (GlcNAc...) asparagine glycosylation occurs at asparagine 261.

It belongs to the glycosyl hydrolase 19 family. Chitinase class I subfamily.

The catalysed reaction is Random endo-hydrolysis of N-acetyl-beta-D-glucosaminide (1-&gt;4)-beta-linkages in chitin and chitodextrins.. The chain is Endochitinase At2g43590 from Arabidopsis thaliana (Mouse-ear cress).